The sequence spans 652 residues: 2-oxoglutarate carboxylase large subunit (652 aa).

In terms of domain architecture, Pyruvate carboxyltransferase spans 26–288 (ILITDLTPRD…DTGIDMKKLD (263 aa)). Residues 34-38 (RDGQQ) and arginine 105 each bind substrate. Aspartate 35 serves as a coordination point for a divalent metal cation. Positions 196, 227, and 229 each coordinate a divalent metal cation. N6-carboxylysine is present on lysine 196. Threonine 362 contributes to the substrate binding site. A Biotinyl-binding domain is found at 563-643 (AEEKGIPKAT…TPDDALLRIK (81 aa)). Lysine 609 carries the N6-biotinyllysine modification.

As to quaternary structure, heterohexadecamer of 8 large subunits and 8 small subunits. Mg(2+) is required as a cofactor. Requires Mn(2+) as cofactor. The cofactor is Co(2+). Post-translationally, biotinylated.

It catalyses the reaction hydrogencarbonate + 2-oxoglutarate + ATP = (S)-oxalosuccinate + ADP + phosphate + H(+). The sequence is that of 2-oxoglutarate carboxylase large subunit from Hydrogenobacter thermophilus (strain DSM 6534 / IAM 12695 / TK-6).